Consider the following 57-residue polypeptide: Mambalgin-3 (57 aa).

Disulfide bonds link C3–C19, C12–C37, C41–C49, and C50–C55.

Belongs to the three-finger toxin family. Short-chain subfamily. Mambalgin sub-subfamily. In terms of tissue distribution, expressed by the venom gland.

The protein localises to the secreted. This three-finger toxin inhibits ASIC channels. It acts as a gating modifier toxin by decreasing the apparent proton sensitivity of activation and by slightly increasing the apparent proton sensitivity for inactivation. It binds more tightly to the closed state and to a much lesser extent the inactivated/desensitized state of ASIC1a. It interacts directly with the outside surface of the thumb domain of chicken ASIC1a (ASIC1a), but does not insert into the acidic pocket as suggested previously. This binding leads to relocation of the thumb domain that could disrupt the acidic pocket of cASIC1a. The peptide exerts both stimulatory and inhibitory effects on ASIC1a. It reversibly inhibits rASIC1a (IC(50)=17 nM), rASIC1b (IC(50)= 44 nM) and rASIC1a-rASIC2a (IC(50)=252 nM) channels. In vivo, it shows a potent naloxone-resistant analgesic effect against acute and inflammatory pain upon central and peripheral injection. In addition, it also has an opioid-independent effect on both thermal and mechanical inflammatory pain after systemic administration and is effective against neuropathic pain. The sequence is that of Mambalgin-3 from Dendroaspis angusticeps (Eastern green mamba).